The chain runs to 643 residues: Phosphomethylpyrimidine synthase (643 aa).

Residues N248, M277, Y306, H342, 362 to 364 (SRG), 403 to 406 (DGLR), and E442 contribute to the substrate site. H446 serves as a coordination point for Zn(2+). Y469 contributes to the substrate binding site. H510 contacts Zn(2+). [4Fe-4S] cluster-binding residues include C590, C593, and C598.

Belongs to the ThiC family. As to quaternary structure, homodimer. [4Fe-4S] cluster is required as a cofactor.

The catalysed reaction is 5-amino-1-(5-phospho-beta-D-ribosyl)imidazole + S-adenosyl-L-methionine = 4-amino-2-methyl-5-(phosphooxymethyl)pyrimidine + CO + 5'-deoxyadenosine + formate + L-methionine + 3 H(+). It functions in the pathway cofactor biosynthesis; thiamine diphosphate biosynthesis. Catalyzes the synthesis of the hydroxymethylpyrimidine phosphate (HMP-P) moiety of thiamine from aminoimidazole ribotide (AIR) in a radical S-adenosyl-L-methionine (SAM)-dependent reaction. This chain is Phosphomethylpyrimidine synthase, found in Burkholderia lata (strain ATCC 17760 / DSM 23089 / LMG 22485 / NCIMB 9086 / R18194 / 383).